A 113-amino-acid chain; its full sequence is Transcriptional regulator RamA (113 aa).

The HTH araC/xylS-type domain occupies 9–107 (DTIVEWIDDN…NQPPGAYRKE (99 aa)). DNA-binding regions (H-T-H motif) lie at residues 26 to 47 (DDIARHAGYSKWHLQRLFLQYK) and 74 to 97 (VYDICLKYGFDSQQTFTRVFTRTF).

In terms of assembly, monomer. Interacts with the C-terminus of RNAP subunit RpoA when part of class I or class II promoter complexes. Also interacts with sigma-70/RpoD in class II promoter complexes.

Functionally, transcriptional regulator. Binds to regulatory regions of target genes, including its own gene, efflux pump operon acrAB, antisense RNA gene micF, and various genes involved in lipid A biosynthesis, including lpxO and lpxL-2. Regulates expression of many genes, perhaps including its own; activates various lipid A biosynthetic genes, and as a result of activating acrAB, confers multidrug resistance. Plays a role in virulence and survival in host cells. The chain is Transcriptional regulator RamA from Klebsiella pneumoniae subsp. pneumoniae (strain HS11286).